The chain runs to 152 residues: Endoribonuclease YbeY (152 aa).

Zn(2+) contacts are provided by His113, His117, and His123.

The protein belongs to the endoribonuclease YbeY family. Zn(2+) serves as cofactor.

It is found in the cytoplasm. In terms of biological role, single strand-specific metallo-endoribonuclease involved in late-stage 70S ribosome quality control and in maturation of the 3' terminus of the 16S rRNA. The polypeptide is Endoribonuclease YbeY (Janthinobacterium sp. (strain Marseille) (Minibacterium massiliensis)).